The following is a 520-amino-acid chain: MMICLLWISVAILVVIHWIYKVNKDYNILAFFARRVQTKDGKPLDSLVPMIKGRTVFANCFDLLGKDTDQVFTHLRQLAKNSGDSYLQYSMGFSNFNVIDAHNAANILNHPNLITKGVIYNFLHPFLRTGVLTATEKKWHTRRSMLTRTFHLDILNQFQEIFIAESLKFVSQFQGQNEVVVSLKDRISRFTLNSICETAMGIKLDEMAEKGDRYRANFHIIDEGLTRRIVNPLYWDDCVYNMFTGHKYNAALKVVHEFSREIIAKRRVLLEEELENRRATQTADDDICVIRKKRFAMLDTLICAEKDGLIDDIGISEEVDTLMAEGYDTTSIGLVFGLMNMSLYAAEQELCYQEIQEHILDDLSNLNLSQLSKLNYLGYFIKETMRLYPSIPIMGRQTLQETELENGLILPKRSQINIHVFDIHRNPKYWESPEEFRPERFLPQNCLKRHPYAYIPFSAGQRNCIGQKYAMQEMKTLMVVILKHFKILPVIDPKSIVFQVGITLRFKNKIKVKLVRRNCV.

Heme-binding residues include Glu325 and Cys464.

This sequence belongs to the cytochrome P450 family. The cofactor is heme.

The protein resides in the endoplasmic reticulum membrane. It localises to the microsome membrane. Functionally, may be involved in the metabolism of insect hormones and in the breakdown of synthetic insecticides. The sequence is that of Probable cytochrome P450 4p2 (Cyp4p2) from Drosophila melanogaster (Fruit fly).